A 199-amino-acid polypeptide reads, in one-letter code: Glycerol-3-phosphate acyltransferase (199 aa).

Transmembrane regions (helical) follow at residues 3 to 23 (AAVW…GVLV), 50 to 70 (WGPA…AVLV), 78 to 98 (DWML…SVFL), 113 to 133 (LLFL…SVIL), and 154 to 174 (LALG…LLIF).

The protein belongs to the PlsY family. Probably interacts with PlsX.

The protein resides in the cell inner membrane. It carries out the reaction an acyl phosphate + sn-glycerol 3-phosphate = a 1-acyl-sn-glycero-3-phosphate + phosphate. Its pathway is lipid metabolism; phospholipid metabolism. In terms of biological role, catalyzes the transfer of an acyl group from acyl-phosphate (acyl-PO(4)) to glycerol-3-phosphate (G3P) to form lysophosphatidic acid (LPA). This enzyme utilizes acyl-phosphate as fatty acyl donor, but not acyl-CoA or acyl-ACP. This Thermus thermophilus (strain ATCC 27634 / DSM 579 / HB8) protein is Glycerol-3-phosphate acyltransferase.